Here is a 273-residue protein sequence, read N- to C-terminus: Petrobactin import ATP-binding protein FpuD (273 aa).

Positions 5-241 (LETKRLTLSY…KLVRDVFRME (237 aa)) constitute an ABC transporter domain. 37 to 44 (GSNGCGKS) contacts ATP.

It belongs to the ABC transporter superfamily. In terms of assembly, the complex is composed of two ATP-binding proteins (FpuD), two transmembrane proteins (FpuB) and a solute-binding protein (FpuA).

It is found in the cell membrane. It carries out the reaction a Fe(III)-siderophore(out) + ATP + H2O = a Fe(III)-siderophore(in) + ADP + phosphate + H(+). Part of an ABC transporter complex involved in ferric-petrobactin uptake. Probably responsible for energy coupling to the transport system. This is Petrobactin import ATP-binding protein FpuD from Bacillus anthracis.